An 89-amino-acid chain; its full sequence is Probable monothiol glutaredoxin GrlA (89 aa).

The Glutaredoxin domain occupies 1–89; it reads MLYMKGTPKM…EPMLRDAVAA (89 aa). Lysine 5 is a binding site for glutathione. Cysteine 13 is a [2Fe-2S] cluster binding site. Glutathione-binding positions include arginine 42, phenylalanine 54, and 67–68; that span reads SD.

Belongs to the glutaredoxin family. Monothiol subfamily.

The polypeptide is Probable monothiol glutaredoxin GrlA (grlA) (Legionella pneumophila subsp. pneumophila (strain Philadelphia 1 / ATCC 33152 / DSM 7513)).